The chain runs to 247 residues: tRNA (guanine-N(1)-)-methyltransferase (247 aa).

G126 is a binding site for S-adenosyl-L-methionine.

It belongs to the RNA methyltransferase TrmD family. In terms of assembly, homodimer.

Its subcellular location is the cytoplasm. It catalyses the reaction guanosine(37) in tRNA + S-adenosyl-L-methionine = N(1)-methylguanosine(37) in tRNA + S-adenosyl-L-homocysteine + H(+). Its function is as follows. Specifically methylates guanosine-37 in various tRNAs. In Jannaschia sp. (strain CCS1), this protein is tRNA (guanine-N(1)-)-methyltransferase.